Here is a 124-residue protein sequence, read N- to C-terminus: MAAELHVALVAADREVWSGEATLVVARTTSGDIGVMPGHQPLLGVLESGPVTIRTSDGGTVVAAVHGGFISFADNKLSLLAEVAELSDEIDVHRAERKLEQAKTEGDAHAERRADVRLRAAAGR.

Basic and acidic residues predominate over residues 99–118; sequence LEQAKTEGDAHAERRADVRL. The disordered stretch occupies residues 99-124; that stretch reads LEQAKTEGDAHAERRADVRLRAAAGR.

This sequence belongs to the ATPase epsilon chain family. F-type ATPases have 2 components, CF(1) - the catalytic core - and CF(0) - the membrane proton channel. CF(1) has five subunits: alpha(3), beta(3), gamma(1), delta(1), epsilon(1). CF(0) has three main subunits: a, b and c.

The protein localises to the cell membrane. Produces ATP from ADP in the presence of a proton gradient across the membrane. In Streptomyces coelicolor (strain ATCC BAA-471 / A3(2) / M145), this protein is ATP synthase epsilon chain (atpC).